We begin with the raw amino-acid sequence, 194 residues long: Peptidyl-tRNA hydrolase (194 aa).

Residue tyrosine 17 coordinates tRNA. Histidine 22 serves as the catalytic Proton acceptor. 3 residues coordinate tRNA: tyrosine 68, asparagine 70, and asparagine 116.

The protein belongs to the PTH family. In terms of assembly, monomer.

It is found in the cytoplasm. It catalyses the reaction an N-acyl-L-alpha-aminoacyl-tRNA + H2O = an N-acyl-L-amino acid + a tRNA + H(+). Its function is as follows. Hydrolyzes ribosome-free peptidyl-tRNAs (with 1 or more amino acids incorporated), which drop off the ribosome during protein synthesis, or as a result of ribosome stalling. In terms of biological role, catalyzes the release of premature peptidyl moieties from peptidyl-tRNA molecules trapped in stalled 50S ribosomal subunits, and thus maintains levels of free tRNAs and 50S ribosomes. In Pseudomonas entomophila (strain L48), this protein is Peptidyl-tRNA hydrolase.